We begin with the raw amino-acid sequence, 310 residues long: Ribosomal RNA small subunit methyltransferase H (310 aa).

S-adenosyl-L-methionine is bound by residues 33–35, aspartate 53, phenylalanine 79, aspartate 100, and glutamine 107; that span reads AGH.

It belongs to the methyltransferase superfamily. RsmH family.

The protein localises to the cytoplasm. It catalyses the reaction cytidine(1402) in 16S rRNA + S-adenosyl-L-methionine = N(4)-methylcytidine(1402) in 16S rRNA + S-adenosyl-L-homocysteine + H(+). Functionally, specifically methylates the N4 position of cytidine in position 1402 (C1402) of 16S rRNA. This is Ribosomal RNA small subunit methyltransferase H from Clostridium botulinum (strain Eklund 17B / Type B).